The following is a 132-amino-acid chain: Large ribosomal subunit protein uL14 (132 aa).

The protein belongs to the universal ribosomal protein uL14 family. In terms of assembly, part of the 50S ribosomal subunit. Forms a cluster with proteins L3 and L24e, part of which may contact the 16S rRNA in 2 intersubunit bridges.

Binds to 23S rRNA. Forms part of two intersubunit bridges in the 70S ribosome. The protein is Large ribosomal subunit protein uL14 of Methanocella arvoryzae (strain DSM 22066 / NBRC 105507 / MRE50).